Reading from the N-terminus, the 379-residue chain is Methionine aminopeptidase 1 (379 aa).

Residues 7-60 form a C6H2-type zinc finger; that stretch reads KHICCGIDCNNEADRLQCPKCLNDGVKSYFCGQECFRNSWNIHKHLHRPPNVEK. Residues cysteine 10, cysteine 15, cysteine 24, cysteine 27, cysteine 37, cysteine 41, histidine 49, and histidine 53 each coordinate Zn(2+). Histidine 192 contacts a protein. Zn(2+) contacts are provided by aspartate 209, aspartate 220, and histidine 289. Histidine 296 contacts a protein. Zn(2+) contacts are provided by glutamate 322 and glutamate 353. Serine 373 is subject to Phosphoserine.

This sequence belongs to the peptidase M24A family. Methionine aminopeptidase type 1 subfamily. Associates with the 60S ribosomal subunit of the 80S translational complex. Zn(2+) is required as a cofactor. Co(2+) serves as cofactor. It depends on Mn(2+) as a cofactor. The cofactor is Fe(2+).

It localises to the cytoplasm. The protein resides in the nucleus. It is found in the nucleolus. It carries out the reaction Release of N-terminal amino acids, preferentially methionine, from peptides and arylamides.. Cotranslationally removes the N-terminal methionine from nascent proteins. The N-terminal methionine is often cleaved when the second residue in the primary sequence is small and uncharged (Met-Ala-, Cys, Gly, Pro, Ser, Thr, or Val). The chain is Methionine aminopeptidase 1 (fma1) from Schizosaccharomyces pombe (strain 972 / ATCC 24843) (Fission yeast).